We begin with the raw amino-acid sequence, 344 residues long: Heme A synthase (344 aa).

9 helical membrane passes run 20-40, 104-124, 135-155, 170-190, 205-225, 233-253, 265-285, 296-316, and 317-337; these read IAWWLIGVAALVFIMVVVGGL, RFLGRLIGLAFFVPFVFFVVT, LIFLFVLGGMQGVLGWWMVMS, AHLGLATLIFGALIWTALDLL, AAAILALIFLQTILGAFVAGI, TWPLMAGAFIPDGLFAMTPVW, FQHRMTAYLLLLCVVWHWWAA, WLAVATFAQACIGIWTVLWVV, and PIPLGAAHQAGAMVVFGVAVW. Position 267 (His267) interacts with heme. His324 serves as a coordination point for heme.

Belongs to the COX15/CtaA family. Type 2 subfamily. In terms of assembly, interacts with CtaB. Heme b serves as cofactor.

Its subcellular location is the cell membrane. The enzyme catalyses Fe(II)-heme o + 2 A + H2O = Fe(II)-heme a + 2 AH2. The protein operates within porphyrin-containing compound metabolism; heme A biosynthesis; heme A from heme O: step 1/1. Catalyzes the conversion of heme O to heme A by two successive hydroxylations of the methyl group at C8. The first hydroxylation forms heme I, the second hydroxylation results in an unstable dihydroxymethyl group, which spontaneously dehydrates, resulting in the formyl group of heme A. In Parvibaculum lavamentivorans (strain DS-1 / DSM 13023 / NCIMB 13966), this protein is Heme A synthase.